A 255-amino-acid chain; its full sequence is Ribonuclease HII (255 aa).

The RNase H type-2 domain maps to 72 to 255 (QYIAGIDEAG…RSFAPVKAHE (184 aa)). Asp78, Glu79, and Asp170 together coordinate a divalent metal cation.

The protein belongs to the RNase HII family. The cofactor is Mn(2+). It depends on Mg(2+) as a cofactor.

The protein resides in the cytoplasm. The catalysed reaction is Endonucleolytic cleavage to 5'-phosphomonoester.. Functionally, endonuclease that specifically degrades the RNA of RNA-DNA hybrids. The protein is Ribonuclease HII of Bacillus licheniformis (strain ATCC 14580 / DSM 13 / JCM 2505 / CCUG 7422 / NBRC 12200 / NCIMB 9375 / NCTC 10341 / NRRL NRS-1264 / Gibson 46).